A 156-amino-acid polypeptide reads, in one-letter code: ATP synthase subunit b (156 aa).

A helical membrane pass occupies residues 7-27; it reads FFAQMVVFFILWWVVAKFIWP.

It belongs to the ATPase B chain family. In terms of assembly, F-type ATPases have 2 components, F(1) - the catalytic core - and F(0) - the membrane proton channel. F(1) has five subunits: alpha(3), beta(3), gamma(1), delta(1), epsilon(1). F(0) has three main subunits: a(1), b(2) and c(10-14). The alpha and beta chains form an alternating ring which encloses part of the gamma chain. F(1) is attached to F(0) by a central stalk formed by the gamma and epsilon chains, while a peripheral stalk is formed by the delta and b chains.

Its subcellular location is the cell inner membrane. Functionally, f(1)F(0) ATP synthase produces ATP from ADP in the presence of a proton or sodium gradient. F-type ATPases consist of two structural domains, F(1) containing the extramembraneous catalytic core and F(0) containing the membrane proton channel, linked together by a central stalk and a peripheral stalk. During catalysis, ATP synthesis in the catalytic domain of F(1) is coupled via a rotary mechanism of the central stalk subunits to proton translocation. In terms of biological role, component of the F(0) channel, it forms part of the peripheral stalk, linking F(1) to F(0). The chain is ATP synthase subunit b from Cupriavidus taiwanensis (strain DSM 17343 / BCRC 17206 / CCUG 44338 / CIP 107171 / LMG 19424 / R1) (Ralstonia taiwanensis (strain LMG 19424)).